The primary structure comprises 168 residues: T-cell surface glycoprotein CD3 delta chain (168 aa).

A signal peptide spans 1–21; the sequence is MEHSRFLSCLILAALLSQVNP. At 22 to 102 the chain is on the extracellular side; sequence RILKVLEPED…CVELDTATLA (81 aa). Cysteines 37 and 74 form a disulfide. N-linked (GlcNAc...) asparagine glycosylation is found at asparagine 38 and asparagine 56. The chain crosses the membrane as a helical span at residues 103-123; sequence GMIITDIIATVLLALGVYCFA. At 124 to 168 the chain is on the cytoplasmic side; sequence GHETGRFSRAADTQALMGNDQLYQPLRERNDAQYSRLGDKWARNK. The ITAM domain maps to 135–163; that stretch reads DTQALMGNDQLYQPLRERNDAQYSRLGDK. 2 positions are modified to phosphotyrosine: tyrosine 146 and tyrosine 157.

The TCR-CD3 complex is composed of a CD3D/CD3E and a CD3G/CD3E heterodimers that preferentially associate with TCRalpha and TCRbeta, respectively, to form TCRalpha/CD3E/CD3G and TCRbeta/CD3G/CD3E trimers. In turn, the hexamer interacts with CD3Z homodimer to form the TCR-CD3 complex. Alternatively, TCRalpha and TCRbeta can be replaced by TCRgamma and TCRdelta. Interacts with coreceptors CD4 and CD8. Phosphorylated on Tyr residues after T-cell receptor triggering by LCK in association with CD4/CD8. In terms of tissue distribution, CD3D is mostly present on T-lymphocytes with its TCR-CD3 partners. Present also in fetal NK-cells.

The protein localises to the cell membrane. In terms of biological role, part of the TCR-CD3 complex present on T-lymphocyte cell surface that plays an essential role in adaptive immune response. When antigen presenting cells (APCs) activate T-cell receptor (TCR), TCR-mediated signals are transmitted across the cell membrane by the CD3 chains CD3D, CD3E, CD3G and CD3Z. All CD3 chains contain immunoreceptor tyrosine-based activation motifs (ITAMs) in their cytoplasmic domain. Upon TCR engagement, these motifs become phosphorylated by Src family protein tyrosine kinases LCK and FYN, resulting in the activation of downstream signaling pathways. In addition of this role of signal transduction in T-cell activation, CD3D plays an essential role in thymocyte differentiation. Indeed, participates in correct intracellular TCR-CD3 complex assembly and surface expression. In absence of a functional TCR-CD3 complex, thymocytes are unable to differentiate properly. Interacts with CD4 and CD8 and thus serves to establish a functional link between the TCR and coreceptors CD4 and CD8, which is needed for activation and positive selection of CD4 or CD8 T-cells. The sequence is that of T-cell surface glycoprotein CD3 delta chain (CD3D) from Bos taurus (Bovine).